Here is a 40-residue protein sequence, read N- to C-terminus: Unknown protein from spot 207 of 2D-PAGE of etiolated coleoptile (40 aa).

The protein belongs to the GST superfamily. HSP26 family.

The sequence is that of Unknown protein from spot 207 of 2D-PAGE of etiolated coleoptile from Zea mays (Maize).